The sequence spans 1342 residues: Subtilisin-like protease 2 (1342 aa).

The signal sequence occupies residues 1-18; the sequence is MLNIIYVVSLILIKFIFY. Residues 19–687 constitute a propeptide, inhibition peptide; the sequence is KECNNNNNYY…KLYNNKYSFL (669 aa). Disordered regions lie at residues 85–111 and 143–171; these read EKKTKGEENEIEKKKENDLEEKKENEI and ADVSNNDNSGHEENNKHKLNKKNSSNYKN. N-linked (GlcNAc...) asparagine glycans are attached at residues Asn-165, Asn-343, Asn-451, Asn-455, and Asn-493. Residues 415-474 form a disordered region; the sequence is KKSKKEKENTQQKGGNNPNVDINILNNNNNNNNNNNNNSNNNSNSMNDEEINYNNNNNKE. Positions 430–474 are enriched in low complexity; it reads NNPNVDINILNNNNNNNNNNNNNSNNNSNSMNDEEINYNNNNNKE. The interval 500–531 is disordered; it reads IYHNKNDNSYKNKKEGTGKNNDNNDPNNNNNK. The span at 503–516 shows a compositional bias: basic and acidic residues; sequence NKNDNSYKNKKEGT. Residues 518-531 show a composition bias toward low complexity; the sequence is KNNDNNDPNNNNNK. 3 N-linked (GlcNAc...) asparagine glycosylation sites follow: Asn-551, Asn-642, and Asn-729. At 688-1137 the chain is on the extracellular side; the sequence is NKFLNIEPLI…LYNLYEYDSH (450 aa). The region spanning 727-1020 is the Peptidase S8 domain; that stretch reads TWNLSIIRVF…DSLVNAEGAV (294 aa). Active-site charge relay system residues include Asp-755 and His-798. 4 N-linked (GlcNAc...) asparagine glycosylation sites follow: Asn-821, Asn-857, Asn-893, and Asn-951. Ser-961 serves as the catalytic Charge relay system. N-linked (GlcNAc...) asparagine glycans are attached at residues Asn-1010 and Asn-1106. The chain crosses the membrane as a helical span at residues 1138–1158; the sequence is YLLASVILFFLALLSIFVGMI. The Cytoplasmic segment spans residues 1159–1342; it reads YMKSRKHSDK…MNQLDDMFMK (184 aa).

Belongs to the peptidase S8 family. Post-translationally, proteolytically cleaved at the N-terminus to generate a 74kDa intermediate which is further processed into a 72kDa form. The first maturation cleavage is autocatalytic, occurs in the ER and is necessary for the subsequent SUB2 trafficking to the microneme. The second cleavage may be mediated by PMX/plasmepsin X.

Its subcellular location is the cell membrane. It is found in the cytoplasmic vesicle. The protein localises to the secretory vesicle. The protein resides in the microneme membrane. It carries out the reaction Hydrolysis of proteins with broad specificity for peptide bonds, and a preference for a large uncharged residue in P1. Hydrolyzes peptide amides.. Its activity is regulated as follows. Activation may be calcium-dependent. Inhibited by the non-covalent interaction with the cleaved propeptide. Serine protease which plays an essential role in the shedding of AMA1, MSP1 and MSP7 from the surface of the invading merozoite; this step is essential for productive invasion and the release of the adhesion between the erythrocyte and the merozoite. May cleave TRAMP/PTTRAMP, thereby shedding TRAMP from the merozoite surface during erythrocyte invasion. The protein is Subtilisin-like protease 2 of Plasmodium falciparum.